The sequence spans 234 residues: Leucyl/phenylalanyl-tRNA--protein transferase (234 aa).

Belongs to the L/F-transferase family.

Its subcellular location is the cytoplasm. The catalysed reaction is N-terminal L-lysyl-[protein] + L-leucyl-tRNA(Leu) = N-terminal L-leucyl-L-lysyl-[protein] + tRNA(Leu) + H(+). It catalyses the reaction N-terminal L-arginyl-[protein] + L-leucyl-tRNA(Leu) = N-terminal L-leucyl-L-arginyl-[protein] + tRNA(Leu) + H(+). The enzyme catalyses L-phenylalanyl-tRNA(Phe) + an N-terminal L-alpha-aminoacyl-[protein] = an N-terminal L-phenylalanyl-L-alpha-aminoacyl-[protein] + tRNA(Phe). Functionally, functions in the N-end rule pathway of protein degradation where it conjugates Leu, Phe and, less efficiently, Met from aminoacyl-tRNAs to the N-termini of proteins containing an N-terminal arginine or lysine. In Nitratidesulfovibrio vulgaris (strain ATCC 29579 / DSM 644 / CCUG 34227 / NCIMB 8303 / VKM B-1760 / Hildenborough) (Desulfovibrio vulgaris), this protein is Leucyl/phenylalanyl-tRNA--protein transferase.